Here is a 1405-residue protein sequence, read N- to C-terminus: DNA-directed RNA polymerase subunit beta' (1405 aa).

Zn(2+) is bound by residues Cys70, Cys72, Cys85, and Cys88. Residues Asp460, Asp462, and Asp464 each contribute to the Mg(2+) site. Positions 815, 890, 897, and 900 each coordinate Zn(2+).

This sequence belongs to the RNA polymerase beta' chain family. In terms of assembly, the RNAP catalytic core consists of 2 alpha, 1 beta, 1 beta' and 1 omega subunit. When a sigma factor is associated with the core the holoenzyme is formed, which can initiate transcription. It depends on Mg(2+) as a cofactor. Requires Zn(2+) as cofactor.

It carries out the reaction RNA(n) + a ribonucleoside 5'-triphosphate = RNA(n+1) + diphosphate. In terms of biological role, DNA-dependent RNA polymerase catalyzes the transcription of DNA into RNA using the four ribonucleoside triphosphates as substrates. The protein is DNA-directed RNA polymerase subunit beta' of Xanthomonas campestris pv. campestris (strain 8004).